Consider the following 404-residue polypeptide: Cysteine desulfurase IscS (404 aa).

Pyridoxal 5'-phosphate contacts are provided by residues 75–76 (AT), N155, Q183, and 203–205 (SAH). K206 carries the post-translational modification N6-(pyridoxal phosphate)lysine. T243 contacts pyridoxal 5'-phosphate. The active-site Cysteine persulfide intermediate is C328. Residue C328 coordinates [2Fe-2S] cluster.

The protein belongs to the class-V pyridoxal-phosphate-dependent aminotransferase family. NifS/IscS subfamily. As to quaternary structure, homodimer. Forms a heterotetramer with IscU, interacts with other sulfur acceptors. It depends on pyridoxal 5'-phosphate as a cofactor.

Its subcellular location is the cytoplasm. It carries out the reaction (sulfur carrier)-H + L-cysteine = (sulfur carrier)-SH + L-alanine. Its pathway is cofactor biosynthesis; iron-sulfur cluster biosynthesis. Functionally, master enzyme that delivers sulfur to a number of partners involved in Fe-S cluster assembly, tRNA modification or cofactor biosynthesis. Catalyzes the removal of elemental sulfur atoms from cysteine to produce alanine. Functions as a sulfur delivery protein for Fe-S cluster synthesis onto IscU, an Fe-S scaffold assembly protein, as well as other S acceptor proteins. This Colwellia psychrerythraea (strain 34H / ATCC BAA-681) (Vibrio psychroerythus) protein is Cysteine desulfurase IscS.